The sequence spans 553 residues: Fusion glycoprotein F0 (553 aa).

A signal peptide spans 1–31 (MRSRSSTRIPVPLMLIIRIALTLSCIRLTSS). The Extracellular segment spans residues 32-500 (LDGRPLAAAG…LNVKLTSTSA (469 aa)). Cystine bridges form between Cys76/Cys199, Cys338/Cys347, Cys362/Cys370, Cys394/Cys399, and Cys401/Cys424. Asn85 carries an N-linked (GlcNAc...) asparagine; by host glycan. Residues 117–141 (FIGAIIGSVALGVATPAQITAASAL) form a fusion peptide region. Residues 142-170 (IQANQNAANILRLKESIAATNEAVHEVTD) adopt a coiled-coil conformation. Asn191 carries N-linked (GlcNAc...) asparagine; by host glycosylation. An N-linked (GlcNAc...) asparagine; by host glycan is attached at Asn366. Residues Asn447 and Asn471 are each glycosylated (N-linked (GlcNAc...) asparagine; by host). Positions 466-491 (ELGNVNNSISNALNKLEESNSKLDKL) form a coiled coil. A helical transmembrane segment spans residues 501–521 (LITYIVLTVISLVFGVLSLVL). Over 522 to 553 (ACYLMYKQKAQQKTLLWLGNNTLDQMRATTKI) the chain is Cytoplasmic. The S-palmitoyl cysteine; by host moiety is linked to residue Cys523.

The protein belongs to the paramyxoviruses fusion glycoprotein family. Homotrimer of disulfide-linked F1-F2. Post-translationally, the inactive precursor F0 is glycosylated and proteolytically cleaved into F1 and F2 to be functionally active. The cleavage is mediated by cellular proteases during the transport and maturation of the polypeptide.

The protein resides in the virion membrane. The protein localises to the host cell membrane. Its function is as follows. Class I viral fusion protein. Under the current model, the protein has at least 3 conformational states: pre-fusion native state, pre-hairpin intermediate state, and post-fusion hairpin state. During viral and plasma cell membrane fusion, the heptad repeat (HR) regions assume a trimer-of-hairpins structure, positioning the fusion peptide in close proximity to the C-terminal region of the ectodomain. The formation of this structure appears to drive apposition and subsequent fusion of viral and plasma cell membranes. Directs fusion of viral and cellular membranes leading to delivery of the nucleocapsid into the cytoplasm. This fusion is pH independent and occurs directly at the outer cell membrane. The trimer of F1-F2 (F protein) probably interacts with HN at the virion surface. Upon HN binding to its cellular receptor, the hydrophobic fusion peptide is unmasked and interacts with the cellular membrane, inducing the fusion between cell and virion membranes. Later in infection, F proteins expressed at the plasma membrane of infected cells could mediate fusion with adjacent cells to form syncytia, a cytopathic effect that could lead to tissue necrosis. The polypeptide is Fusion glycoprotein F0 (F) (Gallus gallus (Chicken)).